The following is a 185-amino-acid chain: MAEATYTPRLRTHYDSVVRPKLIEEFGYKNPMQVPVIEKIVINMGVGEATADTKKVTTAAADLARIAGQKPVLTRARKAISNFKLRENQPVGAKVTLRQARMYEFMDRLITVALPRVRDFRGLNPKSFDGRGNYAMGMKEHIVFPEINYDQVEQIWGMDIIVCTTAKTDDEARALLRAFNFPFRQ.

Belongs to the universal ribosomal protein uL5 family. As to quaternary structure, part of the 50S ribosomal subunit; part of the 5S rRNA/L5/L18/L25 subcomplex. Contacts the 5S rRNA and the P site tRNA. Forms a bridge to the 30S subunit in the 70S ribosome.

Functionally, this is one of the proteins that bind and probably mediate the attachment of the 5S RNA into the large ribosomal subunit, where it forms part of the central protuberance. In the 70S ribosome it contacts protein S13 of the 30S subunit (bridge B1b), connecting the 2 subunits; this bridge is implicated in subunit movement. Contacts the P site tRNA; the 5S rRNA and some of its associated proteins might help stabilize positioning of ribosome-bound tRNAs. This chain is Large ribosomal subunit protein uL5, found in Azorhizobium caulinodans (strain ATCC 43989 / DSM 5975 / JCM 20966 / LMG 6465 / NBRC 14845 / NCIMB 13405 / ORS 571).